The following is a 214-amino-acid chain: Probable transaldolase (214 aa).

Lysine 83 (schiff-base intermediate with substrate) is an active-site residue.

The protein belongs to the transaldolase family. Type 3B subfamily.

It is found in the cytoplasm. The catalysed reaction is D-sedoheptulose 7-phosphate + D-glyceraldehyde 3-phosphate = D-erythrose 4-phosphate + beta-D-fructose 6-phosphate. Its pathway is carbohydrate degradation; pentose phosphate pathway; D-glyceraldehyde 3-phosphate and beta-D-fructose 6-phosphate from D-ribose 5-phosphate and D-xylulose 5-phosphate (non-oxidative stage): step 2/3. In terms of biological role, transaldolase is important for the balance of metabolites in the pentose-phosphate pathway. The sequence is that of Probable transaldolase from Streptococcus equi subsp. equi (strain 4047).